A 230-amino-acid polypeptide reads, in one-letter code: Uracil-DNA glycosylase (230 aa).

Asp-70 functions as the Proton acceptor in the catalytic mechanism.

This sequence belongs to the uracil-DNA glycosylase (UDG) superfamily. UNG family.

The protein resides in the cytoplasm. The enzyme catalyses Hydrolyzes single-stranded DNA or mismatched double-stranded DNA and polynucleotides, releasing free uracil.. Excises uracil residues from the DNA which can arise as a result of misincorporation of dUMP residues by DNA polymerase or due to deamination of cytosine. This chain is Uracil-DNA glycosylase, found in Campylobacter concisus (strain 13826).